Consider the following 102-residue polypeptide: MPTKARIRLWSSNIDSLNFVVNQIRNMAQKTGIQVSGPIPLPTTRMEVPVMRLPHGEGKKKWEHWEMKVHKRIIDIAADERVMRQLMRVRVPDDVYIEIELI.

The protein belongs to the universal ribosomal protein uS10 family. Part of the 30S ribosomal subunit.

Functionally, involved in the binding of tRNA to the ribosomes. The protein is Small ribosomal subunit protein uS10 of Sulfolobus acidocaldarius (strain ATCC 33909 / DSM 639 / JCM 8929 / NBRC 15157 / NCIMB 11770).